A 580-amino-acid polypeptide reads, in one-letter code: MSEITSTDARAQPEKKDFIRQIIREDLAHGTHTHIRTRFPPEPNGYLHIGHAKAICLDFGVAAEFGGHCTLRMDDTNPSKEDPAFAAAIQDDVSWLGFHWNALRHTSDYFEVLYLAAEKLITDGKAYVCDLNSEQVREYRGTLTEAGRPSPWRERSPDENLELFRQMRAGTFPDGTRTLRAKIDMASGNINLRDPALYRIKHVEHQNTGNTWPIYPMYDFAHALSDAIEGITHSLCTLEFEDHRPLYDWCVNHVDLPNNSHLLKPLLDKGFPQEPSQPRQIEFSRLNINYTVMSKRKLTALVDEKLVEGWDDPRMYTLQGLRRRGYTPAAMRLFVERIGISKQNSIIDFSVLENCLRENLDTIAPRRMATIAPLKLVLTNLPEDHEEQLIFPNHPKDDTQGTRTMPFSRELWIERDDFSEIPPKGWKRLVPGGEVRLRGAGIARVDEVVKNAAGDIIALHGWLDPTSRPGMEGAHRKVKGTIHWVSAPHAVAAEIRLYDRLFSVEKPDDNTDGKTYRDVLNPDSKRVVHGYIEPAAAQTAPEHAFQFERLGYFVTDRHDHDAAHPVFNRSVTLRDTWQRD.

A 'HIGH' region motif is present at residues 41–51; it reads PEPNGYLHIGH. Residues 42–44 and 48–54 each bind ATP; these read EPN and HIGHAKA. L-glutamine contacts are provided by Asp-74 and Tyr-218. Residues Thr-237, 285 to 286, and 293 to 295 contribute to the ATP site; these read RL and MSK. Positions 292–296 match the 'KMSKS' region motif; it reads VMSKR.

This sequence belongs to the class-I aminoacyl-tRNA synthetase family. As to quaternary structure, monomer.

The protein resides in the cytoplasm. It carries out the reaction tRNA(Gln) + L-glutamine + ATP = L-glutaminyl-tRNA(Gln) + AMP + diphosphate. The sequence is that of Glutamine--tRNA ligase from Xylella fastidiosa (strain 9a5c).